We begin with the raw amino-acid sequence, 454 residues long: tRNA modification GTPase MnmE (454 aa).

The (6S)-5-formyl-5,6,7,8-tetrahydrofolate site is built by arginine 23, glutamate 80, and lysine 120. The 162-residue stretch at 216 to 377 folds into the TrmE-type G domain; that stretch reads GMKVVIAGRP…LRNHLKQSMG (162 aa). A K(+)-binding site is contributed by asparagine 226. Residues 226-231, 245-251, 270-273, 335-338, and 358-360 each bind GTP; these read NAGKSS, TDIAGTT, DTAG, NKAD, and SAR. Position 230 (serine 230) interacts with Mg(2+). The K(+) site is built by threonine 245, isoleucine 247, and threonine 250. Threonine 251 lines the Mg(2+) pocket. (6S)-5-formyl-5,6,7,8-tetrahydrofolate is bound at residue lysine 454.

This sequence belongs to the TRAFAC class TrmE-Era-EngA-EngB-Septin-like GTPase superfamily. TrmE GTPase family. As to quaternary structure, homodimer. Heterotetramer of two MnmE and two MnmG subunits. K(+) serves as cofactor.

The protein resides in the cytoplasm. Its function is as follows. Exhibits a very high intrinsic GTPase hydrolysis rate. Involved in the addition of a carboxymethylaminomethyl (cmnm) group at the wobble position (U34) of certain tRNAs, forming tRNA-cmnm(5)s(2)U34. The polypeptide is tRNA modification GTPase MnmE (Shigella dysenteriae serotype 1 (strain Sd197)).